Here is a 547-residue protein sequence, read N- to C-terminus: CTP synthase (547 aa).

Residues 1 to 269 (MKTKFIFVTG…DQKVAIMLRL (269 aa)) form an amidoligase domain region. CTP is bound at residue Ser-14. Ser-14 is a binding site for UTP. ATP contacts are provided by residues 15–20 (SLGKGL) and Asp-72. The Mg(2+) site is built by Asp-72 and Glu-143. Residues 150-152 (DIE), 190-195 (KTKPTQ), and Lys-226 each bind CTP. UTP contacts are provided by residues 190–195 (KTKPTQ) and Lys-226. In terms of domain architecture, Glutamine amidotransferase type-1 spans 294 to 547 (TVAIVGKYVD…IGAAKKHAKV (254 aa)). Position 356 (Gly-356) interacts with L-glutamine. The active-site Nucleophile; for glutamine hydrolysis is Cys-383. Residues 384–387 (LGMQ), Glu-407, and Arg-475 each bind L-glutamine. Residues His-520 and Glu-522 contribute to the active site.

The protein belongs to the CTP synthase family. Homotetramer.

The catalysed reaction is UTP + L-glutamine + ATP + H2O = CTP + L-glutamate + ADP + phosphate + 2 H(+). The enzyme catalyses L-glutamine + H2O = L-glutamate + NH4(+). It carries out the reaction UTP + NH4(+) + ATP = CTP + ADP + phosphate + 2 H(+). The protein operates within pyrimidine metabolism; CTP biosynthesis via de novo pathway; CTP from UDP: step 2/2. Its activity is regulated as follows. Allosterically activated by GTP, when glutamine is the substrate; GTP has no effect on the reaction when ammonia is the substrate. The allosteric effector GTP functions by stabilizing the protein conformation that binds the tetrahedral intermediate(s) formed during glutamine hydrolysis. Inhibited by the product CTP, via allosteric rather than competitive inhibition. Its function is as follows. Catalyzes the ATP-dependent amination of UTP to CTP with either L-glutamine or ammonia as the source of nitrogen. Regulates intracellular CTP levels through interactions with the four ribonucleotide triphosphates. This Desulfovibrio desulfuricans (strain ATCC 27774 / DSM 6949 / MB) protein is CTP synthase.